The chain runs to 529 residues: UDP-glucuronosyltransferase 2B9 (529 aa).

The signal sequence occupies residues 1 to 21; the sequence is MSVKWTSVILLIQLSFYFSSG. N-linked (GlcNAc...) asparagine glycosylation is found at asparagine 67, asparagine 68, and asparagine 88. The chain crosses the membrane as a helical span at residues 494–514; the sequence is IGFLLACVATVIFVIMKCCLF.

The protein belongs to the UDP-glycosyltransferase family.

It is found in the microsome membrane. The protein resides in the endoplasmic reticulum membrane. It carries out the reaction glucuronate acceptor + UDP-alpha-D-glucuronate = acceptor beta-D-glucuronoside + UDP + H(+). In terms of biological role, UDPGT is of major importance in the conjugation and subsequent elimination of potentially toxic xenobiotics and endogenous compounds. This isozyme is active on C18, C19, and C21 steroids, bile acids, and several xenobiotics including eugenol, 1-naphthol, and p-nitrophenol. In Macaca fascicularis (Crab-eating macaque), this protein is UDP-glucuronosyltransferase 2B9 (UGT2B9).